We begin with the raw amino-acid sequence, 225 residues long: UPF0758 protein Vapar_4033 (225 aa).

One can recognise an MPN domain in the interval 103-225 (VFDSPGTVKQ…SYSMAEKGLL (123 aa)). The Zn(2+) site is built by His174, His176, and Asp187. A JAMM motif motif is present at residues 174 to 187 (HNHPSGSIEPSRAD).

Belongs to the UPF0758 family.

This chain is UPF0758 protein Vapar_4033, found in Variovorax paradoxus (strain S110).